The chain runs to 485 residues: Acetyl-coenzyme A carboxylase carboxyl transferase subunit beta, chloroplastic (485 aa).

A CoA carboxyltransferase N-terminal domain is found at 218-485 (LWIQCDNCYA…FFPLNKNEIK (268 aa)). Zn(2+) is bound by residues cysteine 222, cysteine 225, cysteine 241, and cysteine 244. The C4-type zinc finger occupies 222 to 244 (CDNCYALIYKKALKFKMNVCEQC).

This sequence belongs to the AccD/PCCB family. As to quaternary structure, acetyl-CoA carboxylase is a heterohexamer composed of biotin carboxyl carrier protein, biotin carboxylase and 2 subunits each of ACCase subunit alpha and ACCase plastid-coded subunit beta (accD). It depends on Zn(2+) as a cofactor.

Its subcellular location is the plastid. It is found in the chloroplast stroma. The catalysed reaction is N(6)-carboxybiotinyl-L-lysyl-[protein] + acetyl-CoA = N(6)-biotinyl-L-lysyl-[protein] + malonyl-CoA. Its pathway is lipid metabolism; malonyl-CoA biosynthesis; malonyl-CoA from acetyl-CoA: step 1/1. Its function is as follows. Component of the acetyl coenzyme A carboxylase (ACC) complex. Biotin carboxylase (BC) catalyzes the carboxylation of biotin on its carrier protein (BCCP) and then the CO(2) group is transferred by the transcarboxylase to acetyl-CoA to form malonyl-CoA. This is Acetyl-coenzyme A carboxylase carboxyl transferase subunit beta, chloroplastic from Aethionema cordifolium (Lebanon stonecress).